The following is a 453-amino-acid chain: Aldehyde dehydrogenase, dimeric NADP-preferring (453 aa).

Ser-2 bears the N-acetylserine mark. Position 178 is an N6-acetyllysine (Lys-178). An NAD(+)-binding site is contributed by Gly-188 to Gly-193. Lys-194 is modified (N6-acetyllysine). Active-site residues include Glu-210 and Cys-244.

The protein belongs to the aldehyde dehydrogenase family. In terms of assembly, homodimer. In terms of tissue distribution, high levels in stomach, esophagus and lung; low level in the liver and kidney.

The protein localises to the cytoplasm. It carries out the reaction an aldehyde + NAD(+) + H2O = a carboxylate + NADH + 2 H(+). The catalysed reaction is octanal + NAD(+) + H2O = octanoate + NADH + 2 H(+). Functionally, ALDHs play a major role in the detoxification of alcohol-derived acetaldehyde. They are involved in the metabolism of corticosteroids, biogenic amines, neurotransmitters, and lipid peroxidation. Oxidizes medium and long chain aldehydes into non-toxic fatty acids. Preferentially oxidizes aromatic aldehyde substrates. Comprises about 50 percent of corneal epithelial soluble proteins. May play a role in preventing corneal damage caused by ultraviolet light. The sequence is that of Aldehyde dehydrogenase, dimeric NADP-preferring (ALDH3A1) from Homo sapiens (Human).